The chain runs to 899 residues: Pre-mRNA-splicing factor 6 (899 aa).

Residues 1 to 65 form a disordered region; sequence MERPSFLDQE…QSQPKDDEDD (65 aa). A compositionally biased stretch (basic and acidic residues) spans 28 to 51; sequence TKEKQVVSNDDKGRRIPKRYRENL. 13 HAT repeats span residues 221–253, 255–287, 289–318, 319–350, 352–381, 383–414, 493–525, 545–578, 608–645, 648–680, 682–714, 751–783, and 819–851; these read EDLQ…LEEK, RKFS…LHES, VHYC…DLES, TTVN…FEAD, AQVI…LQSY, NAKM…RNNP, PHSK…ATES, NSDD…DTRQ, LQLD…FLRY, LNEE…IYHS, GNIE…IDEI, GNLD…LFKH, and AQYE…TYAR.

As to quaternary structure, component of the U4/U6-U5 tri-snRNP complex composed of the U4, U6 and U5 snRNAs and at least PRP3, PRP4, PRP6, PRP8, PRP18, PRP31, PRP38, SNU13, SNU23, SNU66, SNU114, SPP381, SMB1, SMD1, SMD2, SMD3, SMX2, SMX3, LSM2, LSM3, LSM4, LSM5, LSM6, LSM7, LSM8, BRR2 and DIB1.

Its subcellular location is the nucleus. Its function is as follows. Participates in pre-mRNA splicing. Part of the U4/U5/U6 tri-snRNP complex, one of the building blocks of the spliceosome. This Saccharomyces cerevisiae (strain ATCC 204508 / S288c) (Baker's yeast) protein is Pre-mRNA-splicing factor 6 (PRP6).